A 639-amino-acid polypeptide reads, in one-letter code: Chaperone protein HtpG (639 aa).

The interval 1–347 (MSQQETHGFQ…SNDLPLNVSR (347 aa)) is a; substrate-binding. Residues 348–564 (EILQDNKVTT…EGEMSTQMIK (217 aa)) form a b region. Residues 565–639 (LMQAAGQDVP…MNQMLLASVK (75 aa)) form a c region.

This sequence belongs to the heat shock protein 90 family. Homodimer.

It is found in the cytoplasm. In terms of biological role, molecular chaperone. Has ATPase activity. In Shewanella halifaxensis (strain HAW-EB4), this protein is Chaperone protein HtpG.